The primary structure comprises 211 residues: Pyridoxine/pyridoxamine 5'-phosphate oxidase (211 aa).

Residues Arg-7–Tyr-10 and Lys-65 contribute to the substrate site. Residues Arg-60–Lys-65, Tyr-75–Thr-76, Arg-81, Lys-82, and Gln-104 each bind FMN. Tyr-122, Arg-126, and Ser-130 together coordinate substrate. Residues Gln-139–Ser-140 and Trp-184 each bind FMN. Arg-190–His-192 contacts substrate. FMN is bound at residue Arg-194.

Belongs to the pyridoxamine 5'-phosphate oxidase family. In terms of assembly, homodimer. The cofactor is FMN.

It carries out the reaction pyridoxamine 5'-phosphate + O2 + H2O = pyridoxal 5'-phosphate + H2O2 + NH4(+). The enzyme catalyses pyridoxine 5'-phosphate + O2 = pyridoxal 5'-phosphate + H2O2. It participates in cofactor metabolism; pyridoxal 5'-phosphate salvage; pyridoxal 5'-phosphate from pyridoxamine 5'-phosphate: step 1/1. Its pathway is cofactor metabolism; pyridoxal 5'-phosphate salvage; pyridoxal 5'-phosphate from pyridoxine 5'-phosphate: step 1/1. Catalyzes the oxidation of either pyridoxine 5'-phosphate (PNP) or pyridoxamine 5'-phosphate (PMP) into pyridoxal 5'-phosphate (PLP). This chain is Pyridoxine/pyridoxamine 5'-phosphate oxidase, found in Vibrio parahaemolyticus serotype O3:K6 (strain RIMD 2210633).